A 145-amino-acid polypeptide reads, in one-letter code: MIALIQRAQQASVSVAGETTGEIGPGLLILLGVEKGDTPESASKLADKVLGYRIFGDENDKMNLNVQQAGGSVLVVSQFTLAADTKKGMRPGFSAGAAPAEAEKLYDYFAACCREKGATTETGRFAADMKVSLINDGPVTFWLQV.

The Gly-cisPro motif, important for rejection of L-amino acids signature appears at 137 to 138 (GP).

This sequence belongs to the DTD family. Homodimer.

The protein resides in the cytoplasm. It carries out the reaction glycyl-tRNA(Ala) + H2O = tRNA(Ala) + glycine + H(+). The catalysed reaction is a D-aminoacyl-tRNA + H2O = a tRNA + a D-alpha-amino acid + H(+). Functionally, an aminoacyl-tRNA editing enzyme that deacylates mischarged D-aminoacyl-tRNAs. Also deacylates mischarged glycyl-tRNA(Ala), protecting cells against glycine mischarging by AlaRS. Acts via tRNA-based rather than protein-based catalysis; rejects L-amino acids rather than detecting D-amino acids in the active site. By recycling D-aminoacyl-tRNA to D-amino acids and free tRNA molecules, this enzyme counteracts the toxicity associated with the formation of D-aminoacyl-tRNA entities in vivo and helps enforce protein L-homochirality. The sequence is that of D-aminoacyl-tRNA deacylase from Erwinia tasmaniensis (strain DSM 17950 / CFBP 7177 / CIP 109463 / NCPPB 4357 / Et1/99).